The sequence spans 602 residues: Potassium-transporting ATPase potassium-binding subunit (602 aa).

4 helical membrane-spanning segments follow: residues 5–25, 65–85, 136–156, and 179–199; these read AMLQ…PLGA, GYAV…YALQ, GLTV…IALI, and LYVL…QGAI. The interval 221-248 is disordered; sequence QDAKGNPVLGKDGKPVMEDKTSQTQTLP. Residues 231-241 are compositionally biased toward basic and acidic residues; it reads KDGKPVMEDKT. The next 6 helical transmembrane spans lie at 283–303, 312–332, 419–439, 458–478, 523–543, and 566–586; these read LANF…CFLF, QGWA…VVET, GLYG…LMVG, AITI…AVSL, IMTG…ILAI, and LFVT…YVPA.

This sequence belongs to the KdpA family. In terms of assembly, the system is composed of three essential subunits: KdpA, KdpB and KdpC.

Its subcellular location is the cell inner membrane. Part of the high-affinity ATP-driven potassium transport (or Kdp) system, which catalyzes the hydrolysis of ATP coupled with the electrogenic transport of potassium into the cytoplasm. This subunit binds the periplasmic potassium ions and delivers the ions to the membrane domain of KdpB through an intramembrane tunnel. This chain is Potassium-transporting ATPase potassium-binding subunit, found in Chromobacterium violaceum (strain ATCC 12472 / DSM 30191 / JCM 1249 / CCUG 213 / NBRC 12614 / NCIMB 9131 / NCTC 9757 / MK).